The following is a 308-amino-acid chain: Cell division protein FtsQ (308 aa).

Residues 1–28 (MQSLSFPPNRRTPRLAPPRRETGRRDPA) form a disordered region. Residues 1–46 (MQSLSFPPNRRTPRLAPPRRETGRRDPAPSRWAYRAQRLWLTPMFR) lie on the Cytoplasmic side of the membrane. Residues 18–28 (PRRETGRRDPA) show a composition bias toward basic and acidic residues. A helical membrane pass occupies residues 47–67 (TALRVGLPIVGVLLVVALIFA). The Periplasmic segment spans residues 68–308 (SADRRAAMAG…RGIDTSGSDL (241 aa)). Residues 92 to 160 (FMVTLLSVDG…GLLEVRVTER (69 aa)) enclose the POTRA domain.

The protein belongs to the FtsQ/DivIB family. FtsQ subfamily.

The protein resides in the cell inner membrane. Functionally, essential cell division protein. This is Cell division protein FtsQ from Cereibacter sphaeroides (strain ATCC 17023 / DSM 158 / JCM 6121 / CCUG 31486 / LMG 2827 / NBRC 12203 / NCIMB 8253 / ATH 2.4.1.) (Rhodobacter sphaeroides).